A 770-amino-acid chain; its full sequence is MIRLILWNNVQSLVFKRCLFVPSNSLTNKRKRRIPPSKPRSSNRKDGDIEPYRMTDQNQTPNTGSIARLPAEVKKELKDLRSFTKVIAQHLKPEQENDSLTSAEKPDTSQLPPIDIEEATDDIFGEISGTKKLSANAVPPPPPPPPPGLDIPDEIKERLGLLSELLVPAKTSNNKLPEKQVENNWKLLLSQLDQAGGLSGLSKRSVSKFFSKIPPKNLKNLIPMIENMYNKAEMSIPHPIYYMFVRSLTLGDKISDSQMQLINKYFQEISKQTDLKIDHYETMILAYVKNNHMEKIDGILAQMKKKNIEISKMIYTSIVRGYIFYQKDHQRALDTFDSMKFLSQKTQPDEKVYTDVIVSCVMHREIERALDLYYELKDKGMNVNQNLLSTLAKGCSRSKQFKTQAWNFLFQVYDHGWVPNLQTYEHMLYIAARDGDVELTRVLFYKMLQTNSVTIRAFRYLILSYSKYVPPHKRKEKHLILLNHKGQLFRQNILQDVDFSKPVHGFPFLPSSHIPDSKFVLAESSAIWAHTVMNNPSFLRQQTLVASYVSIALELGDFTEFKDRFDSASYLNTDGIPKVREIEIIEPRQDEPTEKATTTEEQITSSEPDTNSLIRSPILNQLQQNINDNQFKAPRDSYLYNLAIKAAGKFKDYSFAQQILHERGQFRKSNSFKLLSPKQQNQDDFQFAGYLVECWTNMNLLEDAYAVVLSSVDRFPWSWRELGVLNNAAMKLGSLELAEAVRKVAQVTQVKHHGKIKRQDFKTYVMKRGY.

The N-terminal 90 residues, methionine 1–histidine 90, are a transit peptide targeting the mitochondrion. Disordered stretches follow at residues asparagine 28–alanine 67 and histidine 90–isoleucine 114. The segment covering asparagine 43 to arginine 53 has biased composition (basic and acidic residues). Polar residues predominate over residues threonine 55 to serine 65. 5 PPR repeats span residues lysine 276–isoleucine 310, serine 311–threonine 346, aspartate 349–valine 383, asparagine 384–proline 419, and asparagine 420–threonine 454. Residues arginine 588 to threonine 598 show a composition bias toward basic and acidic residues. The segment at arginine 588–threonine 610 is disordered. Positions threonine 599–threonine 610 are enriched in polar residues. The stretch at aspartate 636–phenylalanine 666 is one PPR 6 repeat.

Belongs to the CCM1 family. Binds to mitochondrial small subunit 15S rRNA.

It is found in the mitochondrion. Regulates mitochondrial small subunit maturation by controlling 15S rRNA 5'-end processing. Localizes to the 5' precursor of the 15S rRNA in a position that is subsequently occupied by mS47 in the mature yeast mtSSU. Uses structure and sequence-specific RNA recognition, binding to a single-stranded region of the precursor and specifically recognizing bases -6 to -1. The exchange of Ccm1 for mS47 is coupled to the irreversible removal of precursor rRNA that is accompanied by conformational changes of the mitoribosomal proteins uS5m and mS26. These conformational changes signal completion of 5'-end rRNA processing through protection of the mature 5'-end of the 15S rRNA and stabilization of mS47. The removal of the 5' precursor together with the dissociation of Ccm1 may be catalyzed by the 5'-3' exoribonuclease Pet127. Involved in the specific removal of group I introns in mitochondrial encoded transcripts. The polypeptide is Mitochondrial 15S rRNA processing factor CCM1 (CCM1) (Candida albicans (strain WO-1) (Yeast)).